The sequence spans 156 residues: Small ribosomal subunit protein uS7 (156 aa).

This sequence belongs to the universal ribosomal protein uS7 family. As to quaternary structure, part of the 30S ribosomal subunit. Contacts proteins S9 and S11.

Functionally, one of the primary rRNA binding proteins, it binds directly to 16S rRNA where it nucleates assembly of the head domain of the 30S subunit. Is located at the subunit interface close to the decoding center, probably blocks exit of the E-site tRNA. In Rhizobium meliloti (strain 1021) (Ensifer meliloti), this protein is Small ribosomal subunit protein uS7.